The sequence spans 895 residues: MSHTADIPLEAPTLLKLASSSVQSQINNDEYMETVILPVPLSQELFARFRNKWNIHNHGPAPVEHLGPPTDEPRPDQGNIDMIKQVFRIWSDSTRLPLEKLNLTGATVDDQIFVDLLHAHAHSITELDLTNVTGVTDLSNAYLYARSTHFPMLTSIRMTSMDLVTGHQPRRKNGIASTEFRALFMLGEEALAEARGQMERDGLRSPLSPSSQPSSIQSDHQSLDALVPCDSPVEPPLITARAPNVKRLFLPRCPAKRTTIDEEEQNTHVILTKILSPLQQLEVLDLSYWSKTDDMRCLQPLSNTLTCLILYDVPDLYHAVPNICHMTELRILDVSQSNRDSGLYPHPVTTLNKLIVSLKYLTHLDISSTNLATQPSSHDNPARYRESVRTDICGLQSLVRPLKYLGLFNCESASHVREIPAEVVSGDANEDQVITSLQMYKDRAGLLQNVLNESYQLYRFGNSNPLTRHTEALHLVLEAMHRHLADSTLQIAGSASLFYIIRKVDMNRDTKRRVVSALLSGMEVHMEEQVMVRNCCLSLCQFEIPQDILFDYSRLAVLLVSVLQHHNADNLTQRIVVFLLNSMACHVEGDQKVQVGSYGAIEMILDQIARKHTANVCDDVMEVGWSFLWNITDETPVNCELFLNANGLDLFQKCYEAFKTERELVRNMMGLIGNIAEVDELRSQLMKDDYVKIFCALLESQEESIEISYNSAGVLAHMVSDGEEVWKQMTVCRNEVMQRIVEATSSWKLATRRFINYRSFRPILRLLPLYHAYASQHWAVWALANLTTTDGEKYCAYVRDEGGVPLLEELVSNAITTTDIRTLANTVLENIRNVENKRNPKSIPADLAHSSNSPTFVPSYVSDVEEEDEGDVEADEEVQDFVNVDFDDYALPMEY.

2 disordered regions span residues 58–78 and 195–221; these read HGPA…PDQG and RGQM…SDHQ. Residues 205–220 show a composition bias toward low complexity; it reads SPLSPSSQPSSIQSDH.

In terms of assembly, interacts with elc-1. Part of an E3 ubiquitin ligase complex including zer-11, cul-2 and elc-1.

Its function is as follows. Acts as a target recruitment subunit in the E3 ubiquitin ligase complex zer-1-cul-2-elc-1. The chain is Zyg eleven-related protein 1 (zer-1) from Caenorhabditis elegans.